A 25-amino-acid polypeptide reads, in one-letter code: C-reactive protein P2 subunit 4 (25 aa).

In terms of domain architecture, Pentraxin (PTX) spans 1–25; sequence GRSLVFPEETANSFVELFPAKELSL.

It belongs to the pentraxin family. Heteropentamer. Discoid arrangement of 5 non-covalently bound subunits 1, 2, 3 and 4. The cofactor is Ca(2+). Post-translationally, glycosylated.

The protein resides in the secreted. Functionally, displays several functions associated with host defense: it promotes agglutination, bacterial capsular swelling, phagocytosis, and complement fixation through its calcium-dependent binding to phosphorylcholine. The polypeptide is C-reactive protein P2 subunit 4 (Gadus morhua (Atlantic cod)).